A 379-amino-acid polypeptide reads, in one-letter code: Lipid-A-disaccharide synthase (379 aa).

This sequence belongs to the LpxB family.

It carries out the reaction a lipid X + a UDP-2-N,3-O-bis[(3R)-3-hydroxyacyl]-alpha-D-glucosamine = a lipid A disaccharide + UDP + H(+). It participates in bacterial outer membrane biogenesis; LPS lipid A biosynthesis. In terms of biological role, condensation of UDP-2,3-diacylglucosamine and 2,3-diacylglucosamine-1-phosphate to form lipid A disaccharide, a precursor of lipid A, a phosphorylated glycolipid that anchors the lipopolysaccharide to the outer membrane of the cell. This Persephonella marina (strain DSM 14350 / EX-H1) protein is Lipid-A-disaccharide synthase.